The following is a 370-amino-acid chain: Protein Wnt-1 (370 aa).

The N-terminal stretch at 1 to 19 is a signal peptide; sequence MRVLALLLAVKAACVLLVS. N-linked (GlcNAc...) asparagine glycosylation is present at N28. 5 disulfides stabilise this stretch: C92–C103, C142–C150, C152–C169, C217–C231, and C219–C226. S223 carries O-palmitoleoyl serine; by PORCN lipidation. Positions 261 to 282 are disordered; that stretch reads GSNRASHRADPRHLEPENPAHK. Over residues 267 to 280 the composition is skewed to basic and acidic residues; it reads HRADPRHLEPENPA. 6 disulfide bridges follow: C299-C330, C315-C325, C329-C369, C345-C360, C347-C357, and C352-C353. Residue N316 is glycosylated (N-linked (GlcNAc...) asparagine). The N-linked (GlcNAc...) asparagine glycan is linked to N359.

Belongs to the Wnt family. Post-translationally, palmitoleoylation is required for efficient binding to frizzled receptors. Palmitoleoylation is necessary for proper trafficking to cell surface. Depalmitoleoylated by NOTUM, leading to inhibit Wnt signaling pathway.

Its subcellular location is the secreted. The protein resides in the extracellular space. The protein localises to the extracellular matrix. Functionally, ligand for members of the frizzled family of seven transmembrane receptors. Acts in the canonical Wnt signaling pathway by promoting beta-catenin-dependent transcriptional activation. Involved in neurogenesis. Performs a partially redundant function with wnt10b in the formation of the midbrain-hindbrain boundary (MHB) organizer. In the hindbrain, mediates lateral inhibition of boundary cell specification, probably via up-regulation of proneural and Delta gene expression in non-boundary cells; localized expression of wnt1 in boundary cells is maintained via rfng-mediated modulation of Notch activity. The protein is Protein Wnt-1 (wnt1) of Danio rerio (Zebrafish).